The following is a 194-amino-acid chain: Ribosomal RNA small subunit methyltransferase G (194 aa).

S-adenosyl-L-methionine-binding positions include G70, Y75, 121–122 (VE), and R135.

Belongs to the methyltransferase superfamily. RNA methyltransferase RsmG family.

The protein resides in the cytoplasm. The enzyme catalyses guanosine(527) in 16S rRNA + S-adenosyl-L-methionine = N(7)-methylguanosine(527) in 16S rRNA + S-adenosyl-L-homocysteine. Its function is as follows. Specifically methylates the N7 position of guanine in position 527 of 16S rRNA. In Aliarcobacter butzleri (strain RM4018) (Arcobacter butzleri), this protein is Ribosomal RNA small subunit methyltransferase G.